The sequence spans 153 residues: Transcriptional repressor NrdR (153 aa).

A zinc finger lies at 3 to 34; sequence CPFCGKENTRVIDSRPADDCSSIRRRRQCDEC. Residues 49 to 139 enclose the ATP-cone domain; it reads LVVIKKDNNR…VYREFKDVNT (91 aa).

It belongs to the NrdR family. Zn(2+) is required as a cofactor.

In terms of biological role, negatively regulates transcription of bacterial ribonucleotide reductase nrd genes and operons by binding to NrdR-boxes. The polypeptide is Transcriptional repressor NrdR (Lachnoclostridium phytofermentans (strain ATCC 700394 / DSM 18823 / ISDg) (Clostridium phytofermentans)).